Reading from the N-terminus, the 202-residue chain is Probable ATP-dependent Clp protease proteolytic subunit 3 (202 aa).

Residue serine 101 is the Nucleophile of the active site. The active site involves histidine 126.

This sequence belongs to the peptidase S14 family. As to quaternary structure, fourteen ClpP subunits assemble into 2 heptameric rings which stack back to back to give a disk-like structure with a central cavity, resembling the structure of eukaryotic proteasomes.

It localises to the cytoplasm. It catalyses the reaction Hydrolysis of proteins to small peptides in the presence of ATP and magnesium. alpha-casein is the usual test substrate. In the absence of ATP, only oligopeptides shorter than five residues are hydrolyzed (such as succinyl-Leu-Tyr-|-NHMec, and Leu-Tyr-Leu-|-Tyr-Trp, in which cleavage of the -Tyr-|-Leu- and -Tyr-|-Trp bonds also occurs).. Its function is as follows. Cleaves peptides in various proteins in a process that requires ATP hydrolysis. Has a chymotrypsin-like activity. Plays a major role in the degradation of misfolded proteins. This is Probable ATP-dependent Clp protease proteolytic subunit 3 from Synechocystis sp. (strain ATCC 27184 / PCC 6803 / Kazusa).